A 1196-amino-acid polypeptide reads, in one-letter code: DNA-directed RNA polymerase I subunit RPA2 (1196 aa).

The segment at 1097–1124 adopts a C4-type zinc-finger fold; the sequence is CRECGSILTTQSSVPKIGSMVTIRCRRC.

It belongs to the RNA polymerase beta chain family. As to quaternary structure, component of the RNA polymerase I (Pol I) complex consisting of 14 subunits.

It is found in the nucleus. The protein resides in the nucleolus. The enzyme catalyses RNA(n) + a ribonucleoside 5'-triphosphate = RNA(n+1) + diphosphate. DNA-dependent RNA polymerase catalyzes the transcription of DNA into RNA using the four ribonucleoside triphosphates as substrates. Second largest core component of RNA polymerase I which synthesizes ribosomal RNA precursors. Proposed to contribute to the polymerase catalytic activity and forms the polymerase active center together with the largest subunit. Pol I is composed of mobile elements and RPA2 is part of the core element with the central large cleft and probably a clamp element that moves to open and close the cleft. The protein is DNA-directed RNA polymerase I subunit RPA2 (RPA2) of Eremothecium gossypii (strain ATCC 10895 / CBS 109.51 / FGSC 9923 / NRRL Y-1056) (Yeast).